We begin with the raw amino-acid sequence, 221 residues long: Translation initiation factor 6 (221 aa).

Belongs to the eIF-6 family.

Binds to the 50S ribosomal subunit and prevents its association with the 30S ribosomal subunit to form the 70S initiation complex. The chain is Translation initiation factor 6 from Methanocella arvoryzae (strain DSM 22066 / NBRC 105507 / MRE50).